Consider the following 433-residue polypeptide: Oxidoreductase acuF (433 aa).

The protein operates within secondary metabolite biosynthesis. Functionally, oxidoreductase; part of the gene cluster that mediates the biosynthesis of aculins. The pathway begins with the synthesis of 6-methylsalicylic acid by the polyketide synthase (PKS) acuA via condensation of acetate and malonate units. The 6-methylsalicylic acid decarboxylase acuB then catalyzes the decarboxylation of 6-methylsalicylic acid to yield m-cresol (also known as 3-methylphenol). These first reactions occur in the cytosol. The intermediate m-cresol is then transported into the endoplasmic reticulum where the cytochrome P450 monooxygenase acuC converts it to m-hydroxybenzyl alcohol, which is further converted to gentisyl alcohol by the cytochrome P450 monooxygenase acuD. Gentisyl alcohol is further oxidized by the oxidoreductase acuE that probably catalyzes hydroxylation of the aromatic ring. The aromatic system might then be opened by oxidation through a Baeyer-Villiger type of oxidation, which could be catalyzed by acuF, with the carboxylic acid at C-1 subsequently reduced to an aldehyde by acuG. Subsequently, a hemiacetal is formed, before the dehydrogenase acuH would reduce the double bond between C-4 and C-6. Finally, keto-enol tautomerism results in formation of aculinic acid, which exists as two diastereomers (both R/S configurations at C-1) by non-enzymatic hemiacetal formation. The carboxypeptidase acuI could be involved in the linking of aculinic acid to an aculene A moiety produced by the aculene biosynthesis cluster and which leads to the production of aculin A. AcuI may also be involved in the attachment of proline to aculinic acid to form epi-aculins A and B. The chain is Oxidoreductase acuF from Aspergillus aculeatus (strain ATCC 16872 / CBS 172.66 / WB 5094).